The chain runs to 498 residues: Glycerol kinase (498 aa).

T12 lines the ADP pocket. T12, T13, and S14 together coordinate ATP. T12 lines the sn-glycerol 3-phosphate pocket. Residue R16 coordinates ADP. Sn-glycerol 3-phosphate contacts are provided by R82, E83, Y135, and D245. Residues R82, E83, Y135, D245, and Q246 each coordinate glycerol. Residues T267 and G310 each coordinate ADP. Residues T267, G310, Q314, and G411 each contribute to the ATP site. ADP contacts are provided by G411 and N415.

Belongs to the FGGY kinase family. In terms of assembly, homotetramer and homodimer (in equilibrium).

The catalysed reaction is glycerol + ATP = sn-glycerol 3-phosphate + ADP + H(+). It functions in the pathway polyol metabolism; glycerol degradation via glycerol kinase pathway; sn-glycerol 3-phosphate from glycerol: step 1/1. With respect to regulation, activated by phosphorylation and inhibited by fructose 1,6-bisphosphate (FBP). Its function is as follows. Key enzyme in the regulation of glycerol uptake and metabolism. Catalyzes the phosphorylation of glycerol to yield sn-glycerol 3-phosphate. The polypeptide is Glycerol kinase (Clostridium botulinum (strain Alaska E43 / Type E3)).